Reading from the N-terminus, the 216-residue chain is Urease operon 23 kDa accessory protein (216 aa).

Functionally, involved in the expression of hydrogenase activity. May be a regulatory gene affecting the expression of the hydrogenase operon or could be involved in the process of nickel incorporation into the hydrogenase apoenzyme. The protein is Urease operon 23 kDa accessory protein of Rhizobium meliloti (strain 1021) (Ensifer meliloti).